A 487-amino-acid chain; its full sequence is Glutamyl-tRNA(Gln) amidotransferase subunit A (487 aa).

Catalysis depends on charge relay system residues Lys-77 and Ser-152. Ser-176 functions as the Acyl-ester intermediate in the catalytic mechanism.

The protein belongs to the amidase family. GatA subfamily. Heterotrimer of A, B and C subunits.

It catalyses the reaction L-glutamyl-tRNA(Gln) + L-glutamine + ATP + H2O = L-glutaminyl-tRNA(Gln) + L-glutamate + ADP + phosphate + H(+). In terms of biological role, allows the formation of correctly charged Gln-tRNA(Gln) through the transamidation of misacylated Glu-tRNA(Gln) in organisms which lack glutaminyl-tRNA synthetase. The reaction takes place in the presence of glutamine and ATP through an activated gamma-phospho-Glu-tRNA(Gln). In Limosilactobacillus fermentum (strain NBRC 3956 / LMG 18251) (Lactobacillus fermentum), this protein is Glutamyl-tRNA(Gln) amidotransferase subunit A.